The primary structure comprises 62 residues: Translational regulator CsrA 3 (62 aa).

It belongs to the CsrA/RsmA family. Homodimer; the beta-strands of each monomer intercalate to form a hydrophobic core, while the alpha-helices form wings that extend away from the core.

Its subcellular location is the cytoplasm. A key translational regulator that binds mRNA to regulate translation initiation and/or mRNA stability. Mediates global changes in gene expression, shifting from rapid growth to stress survival by linking envelope stress, the stringent response and the catabolite repression systems. Usually binds in the 5'-UTR; binding at or near the Shine-Dalgarno sequence prevents ribosome-binding, repressing translation, binding elsewhere in the 5'-UTR can activate translation and/or stabilize the mRNA. Its function is antagonized by small RNA(s). This chain is Translational regulator CsrA 3, found in Pseudomonas syringae pv. tomato (strain ATCC BAA-871 / DC3000).